The sequence spans 80 residues: RNA-binding protein Hfq (80 aa).

The 61-residue stretch at Asp-9 to Val-69 folds into the Sm domain.

It belongs to the Hfq family. In terms of assembly, homohexamer.

RNA chaperone that binds small regulatory RNA (sRNAs) and mRNAs to facilitate mRNA translational regulation in response to envelope stress, environmental stress and changes in metabolite concentrations. Also binds with high specificity to tRNAs. This is RNA-binding protein Hfq from Alkaliphilus oremlandii (strain OhILAs) (Clostridium oremlandii (strain OhILAs)).